Consider the following 91-residue polypeptide: Putative methyltransferase YfdM (91 aa).

This Escherichia coli (strain K12) protein is Putative methyltransferase YfdM (yfdM).